We begin with the raw amino-acid sequence, 1055 residues long: RapA guanosine triphosphatase-activating protein 1 (1055 aa).

6 disordered regions span residues 76–100 (LSPQ…EEER), 256–292 (NHQP…SSLT), 418–525 (QQLL…FLGV), 544–570 (THAT…SPPL), 603–629 (TTQL…PPSE), and 943–969 (NNNS…NLPT). Basic and acidic residues predominate over residues 89 to 100 (QHEKITPEEEER). Low complexity-rich tracts occupy residues 262 to 292 (STPR…SSLT), 442 to 455 (DFNL…NNNN), and 469 to 482 (TTTT…NNNN). Positions 483-494 (ISPQHSGTSGSP) are enriched in polar residues. Low complexity-rich tracts occupy residues 603–622 (TTQL…TSQP) and 943–966 (NNNS…SDSN). The Rap-GAP domain maps to 779–1048 (LIQFEAKNIH…RTRKEFLHSF (270 aa)).

It localises to the cytoplasm. Its subcellular location is the cell cortex. Functionally, mediates the deactivation of rap1 and plays an important role in spatially and temporally regulating cell adhesion and chemotaxis by controlling attachment disassembly in the leading edge through the regulation of myosin II assembly and disassembly. Overexpression leads to defective chemotaxis. The sequence is that of RapA guanosine triphosphatase-activating protein 1 (rapgap1) from Dictyostelium discoideum (Social amoeba).